The sequence spans 349 residues: 3-methyl-2-oxobutanoate hydroxymethyltransferase (349 aa).

Belongs to the PanB family.

The catalysed reaction is 3-methyl-2-oxobutanoate + (6R)-5,10-methylene-5,6,7,8-tetrahydrofolate + H2O = 2-dehydropantoate + (6S)-5,6,7,8-tetrahydrofolate. It functions in the pathway cofactor biosynthesis; (R)-pantothenate biosynthesis; (R)-pantoate from 3-methyl-2-oxobutanoate: step 1/2. The protein is 3-methyl-2-oxobutanoate hydroxymethyltransferase (panB) of Emericella nidulans (strain FGSC A4 / ATCC 38163 / CBS 112.46 / NRRL 194 / M139) (Aspergillus nidulans).